Consider the following 490-residue polypeptide: Arginine decarboxylase (490 aa).

K226 carries the post-translational modification N6-(pyridoxal phosphate)lysine.

This sequence belongs to the Orn/Lys/Arg decarboxylase class-I family. The cofactor is pyridoxal 5'-phosphate.

The protein resides in the cytoplasm. The enzyme catalyses L-arginine + H(+) = agmatine + CO2. Its pathway is amine and polyamine biosynthesis; agmatine biosynthesis; agmatine from L-arginine: step 1/1. In terms of biological role, catalyzes the formation of agmatine from arginine. This is Arginine decarboxylase (speA) from Bacillus subtilis (strain 168).